The chain runs to 598 residues: Probable pectinesterase/pectinesterase inhibitor 34 (598 aa).

Positions M1–R40 are disordered. Over residues G7–P23 the composition is skewed to low complexity. The segment covering I24–N36 has biased composition (polar residues). Residues V46–V66 form a helical membrane-spanning segment. The tract at residues R81–I232 is pectinesterase inhibitor 34. The segment at D284–S582 is pectinesterase 34. Residues T360 and Q390 each contribute to the substrate site. D413 functions as the Proton donor; for pectinesterase activity in the catalytic mechanism. C427 and C447 are joined by a disulfide. The active-site Nucleophile; for pectinesterase activity is D434. Residues R502 and W504 each coordinate substrate.

It in the N-terminal section; belongs to the PMEI family. The protein in the C-terminal section; belongs to the pectinesterase family. Expressed in siliques.

It localises to the membrane. The enzyme catalyses [(1-&gt;4)-alpha-D-galacturonosyl methyl ester](n) + n H2O = [(1-&gt;4)-alpha-D-galacturonosyl](n) + n methanol + n H(+). It participates in glycan metabolism; pectin degradation; 2-dehydro-3-deoxy-D-gluconate from pectin: step 1/5. In terms of biological role, acts in the modification of cell walls via demethylesterification of cell wall pectin. This is Probable pectinesterase/pectinesterase inhibitor 34 (PME34) from Arabidopsis thaliana (Mouse-ear cress).